A 325-amino-acid polypeptide reads, in one-letter code: tRNA N6-adenosine threonylcarbamoyltransferase (325 aa).

Fe cation contacts are provided by His110 and His114. Residues 133 to 137 (MVSGG), Asp165, Gly178, and Asn268 contribute to the substrate site. Asp296 provides a ligand contact to Fe cation.

The protein belongs to the KAE1 / TsaD family. It depends on Fe(2+) as a cofactor.

It is found in the cytoplasm. The enzyme catalyses L-threonylcarbamoyladenylate + adenosine(37) in tRNA = N(6)-L-threonylcarbamoyladenosine(37) in tRNA + AMP + H(+). In terms of biological role, required for the formation of a threonylcarbamoyl group on adenosine at position 37 (t(6)A37) in tRNAs that read codons beginning with adenine. Is involved in the transfer of the threonylcarbamoyl moiety of threonylcarbamoyl-AMP (TC-AMP) to the N6 group of A37, together with TsaE and TsaB. TsaD likely plays a direct catalytic role in this reaction. This is tRNA N6-adenosine threonylcarbamoyltransferase from Thermosipho melanesiensis (strain DSM 12029 / CIP 104789 / BI429).